Here is a 343-residue protein sequence, read N- to C-terminus: ELAV-like protein 3 (343 aa).

RRM domains are found at residues 35 to 113 (TNLI…YARP), 121 to 202 (ANLY…FANN), and 260 to 338 (WCIF…FKTS).

This sequence belongs to the RRM elav family.

RNA-binding protein that binds to AU-rich sequences (AREs) of target mRNAs. May also bind poly-A tracts via RRM 3. May be involved in neuronal differentiation and maintenance. This is ELAV-like protein 3 from Xenopus tropicalis (Western clawed frog).